We begin with the raw amino-acid sequence, 439 residues long: Xylose isomerase (439 aa).

Active-site residues include histidine 101 and aspartate 104. Residues glutamate 232, glutamate 268, histidine 271, aspartate 296, aspartate 307, aspartate 309, and aspartate 339 each contribute to the Mg(2+) site.

This sequence belongs to the xylose isomerase family. As to quaternary structure, homotetramer. Mg(2+) is required as a cofactor.

Its subcellular location is the cytoplasm. It catalyses the reaction alpha-D-xylose = alpha-D-xylulofuranose. The sequence is that of Xylose isomerase from Serratia proteamaculans (strain 568).